The sequence spans 282 residues: Putative peroxisomal biogenesis factor 19 (282 aa).

The disordered stretch occupies residues 73-95 (QEEAMKKAGADPSEGEGEQPLDP). Cysteine 279 is modified (cysteine methyl ester). Cysteine 279 carries the S-farnesyl cysteine lipid modification. Positions 280–282 (SIM) are cleaved as a propeptide — removed in mature form.

The protein belongs to the peroxin-19 family.

It is found in the peroxisome. This is Putative peroxisomal biogenesis factor 19 (prx-19) from Caenorhabditis elegans.